The chain runs to 359 residues: TGACG-sequence-specific DNA-binding protein TGA-1A (359 aa).

Over residues 44–54 the composition is skewed to basic and acidic residues; sequence KRLDNETEDTS. Residues 44-72 form a disordered region; the sequence is KRLDNETEDTSHGTVGTSNRYEPETSKPV. Positions 72 to 135 constitute a bZIP domain; the sequence is VEKVLRRLAQ…GGVDASQLSY (64 aa). A coiled-coil region spans residues 73–125; it reads EKVLRRLAQNREAARKSRLRKKAYVQQLENSKLKLIQLEQELERARKQGMCVG. A basic motif region spans residues 74-94; the sequence is KVLRRLAQNREAARKSRLRKK. The tract at residues 100 to 114 is leucine-zipper; that stretch reads LENSKLKLIQLEQEL. Residues 143–354 form the DOG1 domain; that stretch reads TAVFDMEYGH…RVLSSQWATR (212 aa).

It belongs to the bZIP family. In terms of assembly, binds DNA as a dimer.

It is found in the nucleus. Transcriptional activator that binds specifically to the DNA sequence 5'-TGACG-3'. Recognizes ocs elements like the as-1 motif of the cauliflower mosaic virus 35S promoter. Binding to the as-1-like cis elements mediate auxin- and salicylic acid-inducible transcription. Could also bind to the Hex-motif (5'-TGACGTGG-3') another cis-acting element found in plant histone promoters. The polypeptide is TGACG-sequence-specific DNA-binding protein TGA-1A (TGA1A) (Nicotiana tabacum (Common tobacco)).